The sequence spans 338 residues: Aspartate-semialdehyde dehydrogenase (338 aa).

NADP(+)-binding positions include 13 to 16 (TGAV) and 41 to 42 (RS). Residue arginine 101 coordinates phosphate. Cysteine 130 functions as the Acyl-thioester intermediate in the catalytic mechanism. Position 157 (glutamine 157) interacts with substrate. An NADP(+)-binding site is contributed by 160–161 (SG). Lysine 214 contacts phosphate. Arginine 236 contributes to the substrate binding site. Histidine 243 functions as the Proton acceptor in the catalytic mechanism. NADP(+) is bound at residue glutamine 316.

The protein belongs to the aspartate-semialdehyde dehydrogenase family. As to quaternary structure, homodimer.

It carries out the reaction L-aspartate 4-semialdehyde + phosphate + NADP(+) = 4-phospho-L-aspartate + NADPH + H(+). It participates in amino-acid biosynthesis; L-lysine biosynthesis via DAP pathway; (S)-tetrahydrodipicolinate from L-aspartate: step 2/4. Its pathway is amino-acid biosynthesis; L-methionine biosynthesis via de novo pathway; L-homoserine from L-aspartate: step 2/3. It functions in the pathway amino-acid biosynthesis; L-threonine biosynthesis; L-threonine from L-aspartate: step 2/5. Catalyzes the NADPH-dependent formation of L-aspartate-semialdehyde (L-ASA) by the reductive dephosphorylation of L-aspartyl-4-phosphate. This chain is Aspartate-semialdehyde dehydrogenase (asd), found in Synechocystis sp. (strain ATCC 27184 / PCC 6803 / Kazusa).